Reading from the N-terminus, the 429-residue chain is 3-phosphoshikimate 1-carboxyvinyltransferase (429 aa).

3-phosphoshikimate-binding residues include Lys11, Ser12, and Arg16. A phosphoenolpyruvate-binding site is contributed by Lys11. Phosphoenolpyruvate is bound by residues Gly82 and Arg110. 3-phosphoshikimate is bound by residues Ser155, Gln157, Asp302, and Lys329. Position 157 (Gln157) interacts with phosphoenolpyruvate. Residue Asp302 is the Proton acceptor of the active site. Phosphoenolpyruvate-binding residues include Arg333 and Arg385.

This sequence belongs to the EPSP synthase family. In terms of assembly, monomer.

The protein resides in the cytoplasm. It catalyses the reaction 3-phosphoshikimate + phosphoenolpyruvate = 5-O-(1-carboxyvinyl)-3-phosphoshikimate + phosphate. Its pathway is metabolic intermediate biosynthesis; chorismate biosynthesis; chorismate from D-erythrose 4-phosphate and phosphoenolpyruvate: step 6/7. In terms of biological role, catalyzes the transfer of the enolpyruvyl moiety of phosphoenolpyruvate (PEP) to the 5-hydroxyl of shikimate-3-phosphate (S3P) to produce enolpyruvyl shikimate-3-phosphate and inorganic phosphate. The sequence is that of 3-phosphoshikimate 1-carboxyvinyltransferase from Helicobacter pylori (strain J99 / ATCC 700824) (Campylobacter pylori J99).